The chain runs to 622 residues: Palmitoyltransferase ZDHHC13 (622 aa).

Met1 is subject to N-acetylmethionine. The Cytoplasmic portion of the chain corresponds to 1–291 (MEGPGLGSQC…RLWRWLQKCE (291 aa)). ANK repeat units lie at residues 43 to 78 (PLIE…VRQP), 81 to 110 (ENVS…VVDQ), 115 to 144 (LNST…DPTL), 148 to 177 (EGFS…SVNM), 181 to 211 (NGQT…SLNV), 216 to 245 (HQNT…SLDI), and 249 to 277 (KGET…KMRA). Residues 292-312 (LFLLLMLSVITMWAIGYILDF) form a helical membrane-spanning segment. The Lumenal portion of the chain corresponds to 313–320 (NSDSWLLK). Residues 321–341 (GCLLVTLFFLTSLFPRFLVGY) form a helical membrane-spanning segment. The Cytoplasmic segment spans residues 342 to 347 (KNLVYL). The chain crosses the membrane as a helical span at residues 348-368 (PTAFLLSSVFWIFMTWFILFF). Over 369–370 (PD) the chain is Lumenal. A helical transmembrane segment spans residues 371–391 (LAGAPFYFSFIFSIVAFLYFF). Over 392–470 (YKTWATDPGF…RCIGFGNHHY (79 aa)) the chain is Cytoplasmic. The 51-residue stretch at 426-476 (TFCTSCLIRKPLRSLHCHVCNCCVARYDQHCLWTGRCIGFGNHHYYIFFLF) folds into the DHHC domain. The active-site S-palmitoyl cysteine intermediate is Cys456. The helical transmembrane segment at 471–491 (YIFFLFFLSMVCGWIIYGSFI) threads the bilayer. Topologically, residues 492-518 (YLSSHCATTFKEDGLWTYLNQIVACSP) are lumenal. Residues 519–539 (WVLYILMLATFHFSWSTFLLL) traverse the membrane as a helical segment. The Cytoplasmic segment spans residues 540-622 (NQLFQIAFLG…PAREKVLRSV (83 aa)).

This sequence belongs to the DHHC palmitoyltransferase family. AKR/ZDHHC17 subfamily. As to quaternary structure, interacts (via ANK repeats) with CLIP3. Interacts (via ANK repeats) with DNAJC5 (via C-terminus). Interacts (via ANK repeats) with HTT. Interacts (via ANK repeats) with MAP6. Interacts (via ANK repeats) with SNAP23. Interacts (via ANK repeats) with SNAP25. May interact (via ANK repeats) with SPRED2.

It is found in the golgi apparatus membrane. It localises to the cytoplasmic vesicle membrane. The catalysed reaction is L-cysteinyl-[protein] + hexadecanoyl-CoA = S-hexadecanoyl-L-cysteinyl-[protein] + CoA. Functionally, palmitoyltransferase that could catalyze the addition of palmitate onto various protein substrates. Palmitoyltransferase for HTT and GAD2. May play a role in Mg(2+) transport. The chain is Palmitoyltransferase ZDHHC13 from Homo sapiens (Human).